Consider the following 221-residue polypeptide: HP1-HOAP-interacting protein (221 aa).

A disordered region spans residues 69–113 (NAKRHKMARETAASITDVSGSQSSSHQSAPSLHVSGQSSEFGASY). Positions 86–103 (VSGSQSSSHQSAPSLHVS) are enriched in low complexity.

Component of the HipHop-HOAP telomere-capping complex, composed of at least HipHop and cav/HOAP, and may include Su(var)205/HP1; HipHop and cav/HOAP, but not Su(var)205, are interdependent for their protein stability. Interacts (via N-terminus) with cav/HOAP and Su(var)205/HP1. The HipHop-HOAP complex recruits the MTV complex, consisting of moi/modigliani, tea and ver/verrocchio, to telomeres to form the terminin telomere-capping complex.

The protein resides in the nucleus. The protein localises to the chromosome. Its subcellular location is the telomere. Functionally, part of the HipHop-HOAP complex that recruits the MTV complex to form the terminin telomere-capping complex, which binds to chromosome ends in a sequence-independent manner and prevents telomere fusion. This Drosophila melanogaster (Fruit fly) protein is HP1-HOAP-interacting protein.